The primary structure comprises 2359 residues: Voltage-dependent T-type calcium channel subunit alpha-1H (2359 aa).

Positions 1–63 (MTEGTLAADE…PGTECGADLG (63 aa)) are disordered. The Cytoplasmic segment spans residues 1 to 100 (MTEGTLAADE…SWCLRLVCNP (100 aa)). Residues 24 to 36 (APVRASPASPGAP) are compositionally biased toward low complexity. The stretch at 87–422 (TRPRSWCLRL…LCLVVIATQF (336 aa)) is one I repeat. The helical transmembrane segment at 101–119 (WFEHISMLVIMLNCVTLGM) threads the bilayer. Topologically, residues 120–141 (FRPCEDVECRSERCSILEAFDD) are extracellular. D140 is a binding site for Zn(2+). Residues 142–160 (FIFAFFAVEMVIKMVALGL) traverse the membrane as a helical segment. Topologically, residues 161–169 (FGQKCYLGD) are cytoplasmic. A helical transmembrane segment spans residues 170-184 (TWNRLDFFIVMAGMM). Over 185-193 (EYSLDGHNV) the chain is Extracellular. Zn(2+)-binding residues include D189 and H191. N-linked (GlcNAc...) asparagine glycosylation is present at N192. Residues 194-212 (SLSAIRTVRVLRPLRAINR) traverse the membrane as a helical segment. Residues 213–232 (VPSMRILVTLLLDTLPMLGN) lie on the Cytoplasmic side of the membrane. A helical transmembrane segment spans residues 233 to 253 (VLLLCFFVFFIFGIVGVQLWA). The Extracellular segment spans residues 254–394 (GLLRNRCFLD…YYVMDAHSFY (141 aa)). The N-linked (GlcNAc...) asparagine glycan is linked to N271. Residues 395 to 419 (NFIYFILLIIMGSFFMINLCLVVIA) form a helical membrane-spanning segment. The Cytoplasmic segment spans residues 420 to 790 (TQFSETKQRE…GKLRRIVDSK (371 aa)). Disordered regions lie at residues 490–573 (VDPS…SESV), 620–656 (GTVNSKGGTSSRPKGLRGAGAPGAAVHSPLSLGSPRP), and 737–769 (GDCRDPVQQPHEVGTPGHSNERRRTPLRKASQP). Residues 503-532 (RRPRRAGRRTASVHHLVYHHHHHHHHHYHF) show a composition bias toward basic residues. A compositionally biased stretch (pro residues) spans 557–566 (PPSPPSPGHG). The span at 620 to 631 (GTVNSKGGTSSR) shows a compositional bias: polar residues. The stretch at 776 to 1015 (WASFSGKLRR…LLVAILVEGF (240 aa)) is one II repeat. Residues 791-811 (YFNRGIMAAILVNTLSMGVEY) traverse the membrane as a helical segment. At 812–824 (HEQPEELTNALEI) the chain is on the extracellular side. The chain crosses the membrane as a helical span at residues 825–846 (SNIVFTSMFALEMLLKLLACGP). Residues 847 to 852 (LGYIRN) lie on the Cytoplasmic side of the membrane. The helical transmembrane segment at 853–871 (PYNIFDGIVVVISVWEIVG) threads the bilayer. The Extracellular segment spans residues 872–879 (QANGGLSV). The helical transmembrane segment at 880-903 (LRTFRLLRVLKLVRFLPALRRQLV) threads the bilayer. Residues 904–914 (VLMRTMDNVAT) are Cytoplasmic-facing. A helical transmembrane segment spans residues 915–935 (FCMLLMLFIFIFSILGMHLFG). The Extracellular portion of the chain corresponds to 936 to 987 (CKFSLKTDSGDTVPDRKNFDSLLWAIVTVFQILTQEDWNVVLYNGMASTSSW). A helical membrane pass occupies residues 988 to 1012 (AALYFVALMTFGNYVLFNLLVAILV). Residues 1013 to 1301 (EGFQAEGDAT…NRLRVSCQKV (289 aa)) are Cytoplasmic-facing. Residues 1061–1197 (GHLEGRGSLP…GASPGPRATP (137 aa)) form a disordered region. Over residues 1117-1126 (SLASLRSSPC) the composition is skewed to polar residues. A compositionally biased stretch (low complexity) spans 1130–1147 (GPNSAGSSRRSSWNSLGR). The III repeat unit spans residues 1292–1569 (NRLRVSCQKV…MFVGVVVENF (278 aa)). The helical transmembrane segment at 1302–1324 (IAHKMFDHVVLVFIFLNCITIAL) threads the bilayer. Residues 1325 to 1342 (ERPDIDPGSTERAFLSVS) lie on the Extracellular side of the membrane. A helical transmembrane segment spans residues 1343–1363 (NYIFTAIFVVEMMVKVVALGL). The Cytoplasmic segment spans residues 1364 to 1373 (LWGEHAYLQS). A helical transmembrane segment spans residues 1374–1393 (SWNVLDGLLVLVSLVDIIVA). The Extracellular segment spans residues 1394–1407 (MASAGGAKILGVLR). The chain crosses the membrane as a helical span at residues 1408–1429 (VLRLLRTLRPLRVISRAPGLKL). At 1430 to 1439 (VVETLISSLR) the chain is on the cytoplasmic side. Residues 1440–1463 (PIGNIVLICCAFFIIFGILGVQLF) form a helical membrane-spanning segment. The Extracellular portion of the chain corresponds to 1464-1540 (KGKFYYCEGT…DQQPVQNHNP (77 aa)). The N-linked (GlcNAc...) asparagine glycan is linked to N1477. The chain crosses the membrane as a helical span at residues 1541–1566 (WMLLYFISFLLIVSFFVLNMFVGVVV). At 1567 to 1621 (ENFHKCRQHQEAEEARRREEKRLRRLERRRRKAQRRPYYADYSHTRRSIHSLCTS) the chain is on the cytoplasmic side. The stretch at 1607–1868 (DYSHTRRSIH…VVVAVLMKHL (262 aa)) is one IV repeat. Residues 1622 to 1642 (HYLDLFITFIICLNVITMSME) traverse the membrane as a helical segment. Over 1643-1656 (HYNQPKSLDEALKY) the chain is Extracellular. The helical transmembrane segment at 1657–1678 (CNYVFTIVFVFEAALKLVAFGF) threads the bilayer. At 1679 to 1685 (RRFFKDR) the chain is on the cytoplasmic side. The helical transmembrane segment at 1686-1704 (WNQLDLAIVLLSIMGIALE) threads the bilayer. Residues 1705-1718 (EIEMNAALPINPTI) lie on the Extracellular side of the membrane. Residues 1719 to 1742 (IRIMRVLRIARVLKLLKMATGMRA) form a helical membrane-spanning segment. Residues 1743 to 1756 (LLDTVVQALPQVGN) are Cytoplasmic-facing. The chain crosses the membrane as a helical span at residues 1757–1777 (LGLLFMLLFFIYAALGVELFG). Topologically, residues 1778 to 1840 (RLECSEDNPC…KHCLSYLPAL (63 aa)) are extracellular. The chain crosses the membrane as a helical span at residues 1841–1868 (SPVYFVTFMLVAQFVLVNVVVAVLMKHL). The Cytoplasmic portion of the chain corresponds to 1869-2359 (EESNKEARED…APDDSGDEPV (491 aa)). A compositionally biased stretch (polar residues) spans 1891–1911 (QGSTAQPPPTAQESQGTQPDT). Disordered stretches follow at residues 1891 to 1913 (QGSTAQPPPTAQESQGTQPDTPN), 1974 to 2003 (SFQVPSAASSPARVSDPLCALSPRGTPRSL), 2016 to 2258 (HSES…GERW), and 2335 to 2359 (PQTPLKKPGSTPATPAPDDSGDEPV). The span at 2016–2026 (HSESLEGKVDD) shows a compositional bias: basic and acidic residues. Over residues 2086-2096 (DEAEAADPADE) the composition is skewed to acidic residues. The span at 2166 to 2181 (GESHLESGEVRGRASE) shows a compositional bias: basic and acidic residues.

This sequence belongs to the calcium channel alpha-1 subunit (TC 1.A.1.11) family. CACNA1H subfamily. As to quaternary structure, interacts (via N-terminal cytoplasmic domain) with STAC. In response to raising of intracellular calcium, the T-type channels are activated by CaM-kinase II. Expressed in brain.

Its subcellular location is the cell membrane. The enzyme catalyses Ca(2+)(in) = Ca(2+)(out). Its function is as follows. Voltage-sensitive calcium channel that gives rise to T-type calcium currents. T-type calcium channels belong to the 'low-voltage activated (LVA)' group. A particularity of this type of channel is an opening at quite negative potentials, and a voltage-dependent inactivation. T-type channels serve pacemaking functions in both central neurons and cardiac nodal cells and support calcium signaling in secretory cells and vascular smooth muscle. They may also be involved in the modulation of firing patterns of neurons. In the adrenal zona glomerulosa, participates in the signaling pathway leading to aldosterone production in response to either AGT/angiotensin II, or hyperkalemia. This is Voltage-dependent T-type calcium channel subunit alpha-1H (Cacna1h) from Rattus norvegicus (Rat).